The primary structure comprises 812 residues: MRYIKFFKELNNKNVNLVGGKNASIGEMFQELVPIGIKVPDGFAITSEAYWYLLEQGGAKQKIIELLENVDATEIDVLKIRSKQIRELIFGTPFPSDLRDEIFQAYEILSQQYHMKEADVAVRSSATAEDLPDASFAGQQDTYLNIKGKTELIHYIKSCLASLFTDRAISYRASRGFDHLKVALSVGVQKMVRADKGSAGVMFSIDTETGFKDAVFITSAWGLGENVVGGTINPDEFYVFKPTLEQNKRPIIKRQLGNKTQKMVYAPRGSEHPTRNIKTTKKEWQSFSLSDEDVLILAKYAIEIEKHYSKEAKQYRPMDIEWAKDGESGEIFIVQARPETVQSQKSKEESQVFEKFKFKNPNEKKEIILQGRAIGSKIGSGKVRIINDLEHMNSFKEGEILVTDNTDPDWEPCMKKASAVITNRGGRTCHAAIVAREIGVPAIVGVSGATDSLYTGMEITVSCAEGEEGYVYAGIYEHEIERVELSNMQETQTKIYINIGNPEKAFGFSQLPNHGVGLARMEMIILNQIKAHPLALVDLHHKKSVKEKNEIENLMAGYANPKDFFVKKIAEGIGMISAAFYPKPVIVRTSDFKSNEYMRMLGGSSYEPNEENPMLGYRGASRYYSESYNEAFSWECEALALVREEMGLTNMKVMIPFLRTIEEGKKVLEILRKNNLESGKNGLEIYIMCELPVNVILADDFLSLFDGFSIGSNDLTQLTLGVDRDSELVSHVFDERNEAMLKMFKKAIEACKRHNKYCGICGQAPSDYPEVTEFLVKEGITSISLNPDSVIPTWNAVAKLEKELKEHGLTEH.

Histidine 430 (tele-phosphohistidine intermediate) is an active-site residue. 7 residues coordinate substrate: arginine 520, arginine 588, glutamate 690, glycine 711, serine 712, asparagine 713, and aspartate 714. Mg(2+) is bound at residue glutamate 690. Position 714 (aspartate 714) interacts with Mg(2+). The active-site Proton donor is cysteine 761.

The protein belongs to the PEP-utilizing enzyme family. Mg(2+) is required as a cofactor.

The catalysed reaction is pyruvate + ATP + H2O = phosphoenolpyruvate + AMP + phosphate + 2 H(+). Its pathway is carbohydrate biosynthesis; gluconeogenesis. Functionally, catalyzes the phosphorylation of pyruvate to phosphoenolpyruvate. The chain is Phosphoenolpyruvate synthase (ppsA) from Helicobacter pylori (strain ATCC 700392 / 26695) (Campylobacter pylori).